Reading from the N-terminus, the 232-residue chain is MDPVTHMKHEVAKAAASRVQSGMVVGLGSGSTAALMIQYLGDRVRNGELTNIQAVPTSFQSSVLANEYGIPLTTLNEVDRIDIAIDGADEVDPQRNLIKGGGACHTREKLVDARAEQFIVVVDSSKLVEALGTTFLLPVEVLPEAYIQVGKALEKLGGKPELRMAVKKAGPVVTDQGNLVLDVKFDRIDQPAELEKAINNIPGVLENGLFVGLTDLVLVGEVDGDRVSVREF.

Substrate-binding positions include 29-32, 86-89, and 99-102; these read SGST, DGAD, and KGGG. Glu108 serves as the catalytic Proton acceptor. Residue Lys126 coordinates substrate.

It belongs to the ribose 5-phosphate isomerase family. Homodimer.

The catalysed reaction is aldehydo-D-ribose 5-phosphate = D-ribulose 5-phosphate. It participates in carbohydrate degradation; pentose phosphate pathway; D-ribose 5-phosphate from D-ribulose 5-phosphate (non-oxidative stage): step 1/1. Functionally, catalyzes the reversible conversion of ribose-5-phosphate to ribulose 5-phosphate. This chain is Ribose-5-phosphate isomerase A, found in Synechococcus sp. (strain ATCC 27144 / PCC 6301 / SAUG 1402/1) (Anacystis nidulans).